We begin with the raw amino-acid sequence, 1182 residues long: Rho guanine nucleotide exchange factor osg-1 (1182 aa).

A compositionally biased stretch (acidic residues) spans 1-12 (MLNPNDADDSDS). The interval 1 to 96 (MLNPNDADDS…TNSEPNVDMP (96 aa)) is disordered. Polar residues predominate over residues 29 to 41 (ATVSPSTRNSFYN). Residues 69 to 78 (ASRERSESRR) are compositionally biased toward basic and acidic residues. The region spanning 357–544 (VRHLAARELL…HCLAVAINQH (188 aa)) is the DH domain. Positions 637-669 (EDVQISKDTLSQLEEVERKLESSREDDRVLKKM) form a coiled coil. Residues 863-884 (INSSGSDTESSSDEGTSTAGQT) form a disordered region. The span at 865–879 (SSGSDTESSSDEGTS) shows a compositional bias: low complexity. Positions 897 to 922 (VVNSTERVRSRARDRLARLRNSITSI) form a coiled coil.

In terms of tissue distribution, expressed in muscles in the body wall and head, and in the nervous system in neurons including FLP and ASE neurons in the head.

Probable guanine nucleotide exchange factor which regulates the Rho GTPase rho-1. Functions in ASE sensory neurons where it promotes neuronal degeneration under conditions of oxidative stress. This chain is Rho guanine nucleotide exchange factor osg-1, found in Caenorhabditis elegans.